Here is a 166-residue protein sequence, read N- to C-terminus: Large ribosomal subunit protein mL49 (166 aa).

The interval Pro-54 to Asp-77 is disordered.

It belongs to the mitochondrion-specific ribosomal protein mL49 family. In terms of assembly, component of the mitochondrial ribosome large subunit (39S) which comprises a 16S rRNA and about 50 distinct proteins. Interacts with OXA1L.

It is found in the mitochondrion. This chain is Large ribosomal subunit protein mL49 (Mrpl49), found in Mus musculus (Mouse).